A 330-amino-acid polypeptide reads, in one-letter code: D-alanine--D-alanine ligase (330 aa).

The ATP-grasp domain occupies 121 to 321 (NHYLKDFGVK…IKDVMTDIIE (201 aa)). Residue 149 to 204 (VTRLGLPIFVKPNDGGSSFGVTKVKEVSAIQPAIAKAFGEGREVILERFIDGTEVT) participates in ATP binding. Residues Asp-275, Glu-288, and Asn-290 each contribute to the Mg(2+) site.

Belongs to the D-alanine--D-alanine ligase family. The cofactor is Mg(2+). Requires Mn(2+) as cofactor.

It localises to the cytoplasm. The catalysed reaction is 2 D-alanine + ATP = D-alanyl-D-alanine + ADP + phosphate + H(+). It participates in cell wall biogenesis; peptidoglycan biosynthesis. In terms of biological role, cell wall formation. This is D-alanine--D-alanine ligase from Parabacteroides distasonis (strain ATCC 8503 / DSM 20701 / CIP 104284 / JCM 5825 / NCTC 11152).